A 720-amino-acid polypeptide reads, in one-letter code: Photosystem I P700 chlorophyll a apoprotein A1 (720 aa).

8 helical membrane-spanning segments follow: residues valine 61 to alanine 84, leucine 147 to histidine 170, leucine 186 to leucine 210, threonine 282 to tyrosine 300, tryptophan 337 to tyrosine 360, leucine 376 to valine 402, alanine 424 to histidine 446, and phenylalanine 522 to leucine 540. The [4Fe-4S] cluster site is built by cysteine 564 and cysteine 573. 2 helical membrane passes run histidine 580–tryptophan 601 and leucine 655–phenylalanine 677. Histidine 666 contacts chlorophyll a'. 2 residues coordinate chlorophyll a: methionine 674 and tyrosine 682. Tryptophan 683 serves as a coordination point for phylloquinone. Residues alanine 715–histidine 720 traverse the membrane as a helical segment.

It belongs to the PsaA/PsaB family. As to quaternary structure, the PsaA/B heterodimer binds the P700 chlorophyll special pair and subsequent electron acceptors. PSI consists of a core antenna complex that captures photons, and an electron transfer chain that converts photonic excitation into a charge separation. The eukaryotic PSI reaction center is composed of at least 11 subunits. The cofactor is P700 is a chlorophyll a/chlorophyll a' dimer, A0 is one or more chlorophyll a, A1 is one or both phylloquinones and FX is a shared 4Fe-4S iron-sulfur center..

It localises to the plastid. It is found in the chloroplast thylakoid membrane. The enzyme catalyses reduced [plastocyanin] + hnu + oxidized [2Fe-2S]-[ferredoxin] = oxidized [plastocyanin] + reduced [2Fe-2S]-[ferredoxin]. In terms of biological role, psaA and PsaB bind P700, the primary electron donor of photosystem I (PSI), as well as the electron acceptors A0, A1 and FX. PSI is a plastocyanin-ferredoxin oxidoreductase, converting photonic excitation into a charge separation, which transfers an electron from the donor P700 chlorophyll pair to the spectroscopically characterized acceptors A0, A1, FX, FA and FB in turn. Oxidized P700 is reduced on the lumenal side of the thylakoid membrane by plastocyanin. The chain is Photosystem I P700 chlorophyll a apoprotein A1 from Sequoia sempervirens (California redwood).